Here is a 374-residue protein sequence, read N- to C-terminus: Alanine racemase (374 aa).

Lys44 functions as the Proton acceptor; specific for D-alanine in the catalytic mechanism. Position 44 is an N6-(pyridoxal phosphate)lysine (Lys44). Arg139 is a binding site for substrate. Tyr269 (proton acceptor; specific for L-alanine) is an active-site residue. Residue Met317 participates in substrate binding.

Belongs to the alanine racemase family. It depends on pyridoxal 5'-phosphate as a cofactor.

The catalysed reaction is L-alanine = D-alanine. It functions in the pathway amino-acid biosynthesis; D-alanine biosynthesis; D-alanine from L-alanine: step 1/1. Catalyzes the interconversion of L-alanine and D-alanine. May also act on other amino acids. This is Alanine racemase (alr) from Bordetella avium (strain 197N).